The chain runs to 377 residues: Prostaglandin reductase-3 (377 aa).

Lys35 is subject to N6-acetyllysine. Residues Thr185, Ser205, Lys209, Tyr224, Ser247, Ile269, and Tyr275 each contribute to the NADP(+) site. At Ser299 the chain carries Phosphoserine. NADP(+) contacts are provided by residues 303 to 305 (FFL) and Asn361.

It belongs to the zinc-containing alcohol dehydrogenase family. Quinone oxidoreductase subfamily.

It localises to the peroxisome. The enzyme catalyses 13,14-dihydro-15-oxo-prostaglandin E2 + NADP(+) = 15-oxoprostaglandin E2 + NADPH + H(+). It catalyses the reaction 13,14-dihydro-15-oxo-prostaglandin E1 + NADP(+) = 15-oxoprostaglandin E1 + NADPH + H(+). It carries out the reaction 13,14-dihydro-15-oxo-PGF2alpha + NADP(+) = 15-oxoprostaglandin F2alpha + NADPH + H(+). The catalysed reaction is 13,14-dihydro-15-oxo-prostaglandin F1alpha + NADP(+) = 15-oxoprostaglandin F1alpha + NADPH + H(+). Its function is as follows. Functions as 15-oxo-prostaglandin 13-reductase and acts on 15-keto-PGE1, 15-keto-PGE2, 15-keto-PGE1-alpha and 15-keto-PGE2-alpha with highest efficiency towards 15-keto-PGE2-alpha. Overexpression represses transcriptional activity of PPARG and inhibits adipocyte differentiation. In Bos taurus (Bovine), this protein is Prostaglandin reductase-3 (PTGR3).